The primary structure comprises 1222 residues: MESSKFVKIIWVFGIWILVFTFLIIYNNYDYKSTFGINKFEKRSLKTINQINNKENGDDKKLSVFLIPHSHCDGGWLQDYDGYYYNIVQYILSGVVNELNLDKEKKFNWVEIGFFSRWWNDQNEIQKEIVRNLINNKQLSFISGGWVQNDEATATIDDVITQMTQGHQWLKDTLNYTVEYAWQIDPFGYSSSTPTIFSSMGIKGLVINRVSNDVKSYMKSVKEMEFIWKGSESLGEQSQMLVSTLNIHYDYPKHIDPKKDFSLNDRIKGFTKYLNDLSKTRESNILMIPLGDDFRYSNAKTEFSVSKEWVKALQDNKEYYNIKEIKYATLDEYFIALEDSFLRNNKFGKSRKQNVYTETFSDGDDEVSALSLYNKDFFPYSTGNLEYWTGYYTTRPLLKRLIRESSLLQKSSDILYTLAIGENSNNQIDINNLQTLSNQLNENRNTIALVQHHDIVTGTSRSFVLNDNFQRLQKSRISNYNIISNSLEYLLNKSNNKTNNNNNNNNKNNNNNNNNNNNNNNNLKNTNSISTTGSSSSSGSGSSNNNNNTVNKSEPFNFENAIDLSNESNNQYSLVFHNTLGWEVNQHVSFRIKVNKNDNQLLESIQLVEAISNKTIQIQIIPIQDDSNCQSIENNYIVFAIINLPPLGLNTYYLSIANSEDSKSNFTYLSKPKLLKKGNEINFNNNRFKVEFESNGLISKITDKNSNEIKTIEQTFHQYSTKKSGPYIFNVKGGKKHGFLENPDKFIYHDGPLVSQLTMLYGVDDYCNVTSIVVQRIYKNNNEINNSNSKSLITENYIETGYSINGDMNRETTINYKVKDLENDDIFYTDNGLESRKRIYNHDRSVNQNYYPVLGYIKLKETSENNNHQYTVYVDRSVGATSPSDGEMEIMIHRTMDTDDWKGVNWPSKDIGRSDAKLYFNMDLVNNQLQNEKRISLHITNQPIMFVKKHNNQTGYLLKYSPLSNQLPSNIHLQSLLTLKNNTVGLRLFNIHEVDSNTQSTTDTDKSTLFNELEISNFIETGLSFLKLTKNNLIDKFSTRINKKFPIKCGESEYSFINEKPSSIIFSNNGTNNIIDGENKGENNKTIETIQIKPHEIKSFTFNFNFQLDQIIPNNNNNNNKYAINKELNNEYIEQSIENQRYEYDFSFFPIKPTFYDDRGKYNRPNHLALILSLSIGIPAGILIIVIALVVTYKKRKNRKTLTSSNSSSNLIQQEDQTDYSP.

The first 21 residues, 1–21 (MESSKFVKIIWVFGIWILVFT), serve as a signal peptide directing secretion. At 22 to 1170 (FLIIYNNYDY…KYNRPNHLAL (1149 aa)) the chain is on the extracellular side. Positions 71 and 73 each coordinate Zn(2+). An N-linked (GlcNAc...) asparagine glycan is attached at Asn175. Zn(2+) contacts are provided by Asp185 and His453. Asp185 serves as the catalytic Nucleophile. Residues Asn492, Asn496, Asn547, Asn551, Asn566, Asn613, Asn665, Asn768, Asn785, Asn952, Asn981, Asn1069, and Asn1084 are each glycosylated (N-linked (GlcNAc...) asparagine). Low complexity predominate over residues 493 to 549 (KSNNKTNNNNNNNNKNNNNNNNNNNNNNNNLKNTNSISTTGSSSSSGSGSSNNNNNT). The segment at 493-554 (KSNNKTNNNN…NNNNTVNKSE (62 aa)) is disordered. The chain crosses the membrane as a helical span at residues 1171-1191 (ILSLSIGIPAGILIIVIALVV). At 1192 to 1222 (TYKKRKNRKTLTSSNSSSNLIQQEDQTDYSP) the chain is on the cytoplasmic side. The segment covering 1202-1211 (LTSSNSSSNL) has biased composition (low complexity). A disordered region spans residues 1202–1222 (LTSSNSSSNLIQQEDQTDYSP). Polar residues predominate over residues 1212–1222 (IQQEDQTDYSP).

Belongs to the glycosyl hydrolase 38 family. The cofactor is Zn(2+).

Its subcellular location is the membrane. It catalyses the reaction Hydrolysis of terminal, non-reducing alpha-D-mannose residues in alpha-D-mannosides.. In Dictyostelium discoideum (Social amoeba), this protein is Alpha-mannosidase D (manD).